The chain runs to 299 residues: Probable endonuclease 4 (299 aa).

Zn(2+)-binding residues include histidine 69, histidine 110, glutamate 145, aspartate 179, histidine 182, histidine 214, aspartate 227, histidine 229, and glutamate 259.

The protein belongs to the AP endonuclease 2 family. The cofactor is Zn(2+).

It catalyses the reaction Endonucleolytic cleavage to 5'-phosphooligonucleotide end-products.. In terms of biological role, endonuclease IV plays a role in DNA repair. It cleaves phosphodiester bonds at apurinic or apyrimidinic (AP) sites, generating a 3'-hydroxyl group and a 5'-terminal sugar phosphate. This chain is Probable endonuclease 4, found in Geobacillus kaustophilus (strain HTA426).